Reading from the N-terminus, the 1059-residue chain is Ceruloplasmin (1059 aa).

Residues 1-19 form the signal peptide; it reads MKFLLLSALLFLHSSLAWT. 6 consecutive Plastocyanin-like domains span residues 20-199, 208-356, 369-554, 564-712, 724-894, and 902-1055; these read REKH…LILC, KEEN…VRDC, HVRH…MKIC, RQKD…VNQC, GERT…LIVC, and FNPK…PNQE. Tyrosine 55, glycine 64, and tyrosine 67 together coordinate Na(+). Histidine 120 and histidine 122 together coordinate Cu(2+). Histidine 120 serves as a coordination point for O2. Position 128 (lysine 128) interacts with Ca(2+). N-linked (GlcNAc...) asparagine glycosylation is present at asparagine 138. Ca(2+)-binding residues include glutamine 143, aspartate 146, and aspartate 147. Cysteine 173 and cysteine 199 are oxidised to a cystine. 2 residues coordinate Cu(2+): histidine 179 and histidine 181. Histidine 179 serves as a coordination point for O2. The N-linked (GlcNAc...) asparagine glycan is linked to asparagine 226. Na(+) is bound at residue serine 255. Cysteine 275 and cysteine 356 form a disulfide bridge. Positions 294, 337, and 342 each coordinate Cu(2+). Asparagine 396 carries an N-linked (GlcNAc...) asparagine glycan. Phenylalanine 407, glycine 416, and tyrosine 419 together coordinate Na(+). The cysteines at positions 528 and 554 are disulfide-linked. A glycan (N-linked (GlcNAc...) asparagine) is linked at asparagine 582. Serine 611 lines the Na(+) pocket. Cysteine 631 and cysteine 712 are disulfide-bonded. Positions 650, 693, 698, and 703 each coordinate Cu(2+). Cysteine 693 acts as the Nucleophile; for glutathione peroxidase activity in catalysis. N-linked (GlcNAc...) asparagine glycosylation occurs at asparagine 756. Na(+)-binding residues include phenylalanine 761, glycine 770, and tyrosine 773. Cysteine 868 and cysteine 894 are disulfide-bonded. Asparagine 920 carries an N-linked (GlcNAc...) asparagine glycan. Serine 949 serves as a coordination point for Na(+). Cu(2+)-binding residues include histidine 988, histidine 991, histidine 993, histidine 1033, cysteine 1034, histidine 1035, histidine 1039, and methionine 1044. Histidine 991 and histidine 993 together coordinate O2. Histidine 1035 provides a ligand contact to O2.

Belongs to the multicopper oxidase family. In terms of assembly, found in a complex with MPO and LTF; interacts directly with MPO and LTF, which allows Fe(3+) incorporation into LTF, activation of CP ferroxidase activity and protection of CP antioxidant properties by MPO. Requires Cu(2+) as cofactor. Synthesized in liver and secreted into the plasma. Also choroid plexus, yolk sac, placenta, and testis; not in stomach and small intestine. Fetal lung and liver.

Its subcellular location is the secreted. The enzyme catalyses 4 Fe(2+) + O2 + 4 H(+) = 4 Fe(3+) + 2 H2O. It catalyses the reaction 4 Cu(+) + O2 + 4 H(+) = 4 Cu(2+) + 2 H2O. The catalysed reaction is a hydroperoxide + 2 glutathione = an alcohol + glutathione disulfide + H2O. It carries out the reaction 4 nitric oxide + O2 + 2 H2O = 4 nitrite + 4 H(+). The enzyme catalyses 2 glutathione + H2O2 = glutathione disulfide + 2 H2O. In terms of biological role, multifunctional blue, copper-binding (6-7 atoms per molecule) glycoprotein. It has ferroxidase activity oxidizing Fe(2+) to Fe(3+) without releasing radical oxygen species. It is involved in iron transport across the cell membrane. Copper ions provide a large number of enzymatic activites. Oxidizes highly toxic ferrous ions to the ferric state for further incorporation onto apo-transferrins, catalyzes Cu(+) oxidation and promotes the oxidation of biogenic amines such as norepinephrin and serotonin. Provides Cu(2+) ions for the ascorbate-mediated deaminase degradation of the heparan sulfate chains of GPC1. Has glutathione peroxidase-like activity, can remove both hydrogen peroxide and lipid hydroperoxide in the presence of thiols. Also shows NO-oxidase and NO2 synthase activities that determine endocrine NO homeostasis. This is Ceruloplasmin (Cp) from Rattus norvegicus (Rat).